A 483-amino-acid chain; its full sequence is Protein nucleotidyltransferase YdiU (483 aa).

ATP contacts are provided by glycine 87, glycine 89, arginine 90, lysine 110, aspartate 122, glycine 123, arginine 173, and arginine 180. Aspartate 249 functions as the Proton acceptor in the catalytic mechanism. Mg(2+) is bound by residues asparagine 250 and aspartate 259. Aspartate 259 lines the ATP pocket.

Belongs to the SELO family. The cofactor is Mg(2+). Mn(2+) is required as a cofactor.

The catalysed reaction is L-seryl-[protein] + ATP = 3-O-(5'-adenylyl)-L-seryl-[protein] + diphosphate. It carries out the reaction L-threonyl-[protein] + ATP = 3-O-(5'-adenylyl)-L-threonyl-[protein] + diphosphate. The enzyme catalyses L-tyrosyl-[protein] + ATP = O-(5'-adenylyl)-L-tyrosyl-[protein] + diphosphate. It catalyses the reaction L-histidyl-[protein] + UTP = N(tele)-(5'-uridylyl)-L-histidyl-[protein] + diphosphate. The catalysed reaction is L-seryl-[protein] + UTP = O-(5'-uridylyl)-L-seryl-[protein] + diphosphate. It carries out the reaction L-tyrosyl-[protein] + UTP = O-(5'-uridylyl)-L-tyrosyl-[protein] + diphosphate. In terms of biological role, nucleotidyltransferase involved in the post-translational modification of proteins. It can catalyze the addition of adenosine monophosphate (AMP) or uridine monophosphate (UMP) to a protein, resulting in modifications known as AMPylation and UMPylation. The polypeptide is Protein nucleotidyltransferase YdiU (Yersinia pseudotuberculosis serotype O:1b (strain IP 31758)).